The primary structure comprises 152 residues: Large-conductance mechanosensitive channel (152 aa).

3 helical membrane-spanning segments follow: residues 21-41 (IDLAVGVIIGAAFGKIVDSLV), 44-64 (VVMPLVNFILGGSVDFSNKFL), and 92-112 (GNFITIIINFVLLAFVIFWMV).

The protein belongs to the MscL family. Homopentamer.

It is found in the cell inner membrane. In terms of biological role, channel that opens in response to stretch forces in the membrane lipid bilayer. May participate in the regulation of osmotic pressure changes within the cell. The chain is Large-conductance mechanosensitive channel from Bordetella pertussis (strain Tohama I / ATCC BAA-589 / NCTC 13251).